A 286-amino-acid chain; its full sequence is Formyltetrahydrofolate deformylase (286 aa).

The ACT domain maps to 8–88 (VLTLQCPEGI…MDWQLRERGQ (81 aa)). Residue D230 is part of the active site.

Belongs to the PurU family.

It carries out the reaction (6R)-10-formyltetrahydrofolate + H2O = (6S)-5,6,7,8-tetrahydrofolate + formate + H(+). Its pathway is purine metabolism; IMP biosynthesis via de novo pathway; formate from 10-formyl-5,6,7,8-tetrahydrofolate: step 1/1. In terms of biological role, catalyzes the hydrolysis of 10-formyltetrahydrofolate (formyl-FH4) to formate and tetrahydrofolate (FH4). This chain is Formyltetrahydrofolate deformylase, found in Corynebacterium sp. (strain P-1).